Here is a 251-residue protein sequence, read N- to C-terminus: 5'-nucleotidase SurE 1 (251 aa).

A divalent metal cation-binding residues include Asp8, Asp9, Ser39, and Asn95.

It belongs to the SurE nucleotidase family. It depends on a divalent metal cation as a cofactor.

The protein localises to the cytoplasm. It carries out the reaction a ribonucleoside 5'-phosphate + H2O = a ribonucleoside + phosphate. Its function is as follows. Nucleotidase that shows phosphatase activity on nucleoside 5'-monophosphates. The protein is 5'-nucleotidase SurE 1 of Thermus thermophilus (strain ATCC BAA-163 / DSM 7039 / HB27).